The primary structure comprises 410 residues: UBX domain-containing protein 3 (410 aa).

Disordered stretches follow at residues 46 to 139 and 154 to 212; these read EEDH…PDPK and TISP…EKPL. Over residues 65–85 the composition is skewed to low complexity; it reads GSSSGISGGDQQPPRPLQRQQ. Positions 86-97 are enriched in polar residues; that stretch reads NTQGQGMKSGTA. Phosphoserine occurs at positions 156, 167, and 186. Low complexity predominate over residues 163–174; it reads SGPSSLASSWAS. Residues 183–196 show a composition bias toward polar residues; sequence NEASGSTTPVTQSG. A Phosphothreonine modification is found at Thr-190. The 66-residue stretch at 211–276 folds into the SEP domain; that stretch reads PLRRTLYFWR…VQHRMDEDYV (66 aa). The UBX domain maps to 334–410; the sequence is ENKPTTRIQV…KNASLVQKSL (77 aa).

As to quaternary structure, interacts with cdc48.

Functionally, involved in CDC48-dependent protein degradation through the ubiquitin/proteasome pathway. Involved in delivery of substrates to the 26S proteasome. Also required for membrane fusion and sporulation. The chain is UBX domain-containing protein 3 (ubx3) from Schizosaccharomyces pombe (strain 972 / ATCC 24843) (Fission yeast).